The primary structure comprises 558 residues: Dihydroxy-acid dehydratase (558 aa).

Cys-51 lines the [2Fe-2S] cluster pocket. Asp-83 provides a ligand contact to Mg(2+). [2Fe-2S] cluster is bound at residue Cys-124. 2 residues coordinate Mg(2+): Asp-125 and Lys-126. At Lys-126 the chain carries N6-carboxylysine. A [2Fe-2S] cluster-binding site is contributed by Cys-196. Residue Glu-447 coordinates Mg(2+). Residue Ser-473 is the Proton acceptor of the active site.

It belongs to the IlvD/Edd family. As to quaternary structure, homodimer. It depends on [2Fe-2S] cluster as a cofactor. The cofactor is Mg(2+).

The catalysed reaction is (2R)-2,3-dihydroxy-3-methylbutanoate = 3-methyl-2-oxobutanoate + H2O. The enzyme catalyses (2R,3R)-2,3-dihydroxy-3-methylpentanoate = (S)-3-methyl-2-oxopentanoate + H2O. The protein operates within amino-acid biosynthesis; L-isoleucine biosynthesis; L-isoleucine from 2-oxobutanoate: step 3/4. It participates in amino-acid biosynthesis; L-valine biosynthesis; L-valine from pyruvate: step 3/4. Functions in the biosynthesis of branched-chain amino acids. Catalyzes the dehydration of (2R,3R)-2,3-dihydroxy-3-methylpentanoate (2,3-dihydroxy-3-methylvalerate) into 2-oxo-3-methylpentanoate (2-oxo-3-methylvalerate) and of (2R)-2,3-dihydroxy-3-methylbutanoate (2,3-dihydroxyisovalerate) into 2-oxo-3-methylbutanoate (2-oxoisovalerate), the penultimate precursor to L-isoleucine and L-valine, respectively. The polypeptide is Dihydroxy-acid dehydratase (Flavobacterium psychrophilum (strain ATCC 49511 / DSM 21280 / CIP 103535 / JIP02/86)).